We begin with the raw amino-acid sequence, 188 residues long: Adenylate kinase (188 aa).

11 to 16 (GAGKGT) provides a ligand contact to ATP. The NMP stretch occupies residues 31-60 (STGDIFRANIKDQTELGREAQRYTDAGNLV). AMP contacts are provided by residues T32, R37, 58–60 (NLV), 86–89 (GYPR), and Q93. Positions 127-137 (GRAQEQGRTDD) are LID. R128 is an ATP binding site. R134 and R145 together coordinate AMP. G173 serves as a coordination point for ATP.

Belongs to the adenylate kinase family. In terms of assembly, monomer.

It is found in the cytoplasm. The catalysed reaction is AMP + ATP = 2 ADP. It functions in the pathway purine metabolism; AMP biosynthesis via salvage pathway; AMP from ADP: step 1/1. In terms of biological role, catalyzes the reversible transfer of the terminal phosphate group between ATP and AMP. Plays an important role in cellular energy homeostasis and in adenine nucleotide metabolism. The protein is Adenylate kinase of Kocuria rhizophila (strain ATCC 9341 / DSM 348 / NBRC 103217 / DC2201).